A 374-amino-acid chain; its full sequence is Glutamate 5-kinase (374 aa).

Position 8 (K8) interacts with ATP. Residues S49, D136, and N148 each coordinate substrate. Residues T168–D169 and T211–K217 each bind ATP. The region spanning Q276–G354 is the PUA domain.

Belongs to the glutamate 5-kinase family.

It is found in the cytoplasm. The enzyme catalyses L-glutamate + ATP = L-glutamyl 5-phosphate + ADP. The protein operates within amino-acid biosynthesis; L-proline biosynthesis; L-glutamate 5-semialdehyde from L-glutamate: step 1/2. Catalyzes the transfer of a phosphate group to glutamate to form L-glutamate 5-phosphate. The chain is Glutamate 5-kinase from Picosynechococcus sp. (strain ATCC 27264 / PCC 7002 / PR-6) (Agmenellum quadruplicatum).